The primary structure comprises 266 residues: MATVESGPDALVERRGHTLIVTMNRPAARNALSTEMMRIMVQAWDRVDNDPDIRCCILTGAGGYFCAGMDLKAATQKPPGDSFKDGSYGPSRIDALLKGRRLTKPLIAAVEGPAIAGGTEILQGTDIRVAGESAKFGISEAKWSLYPMGGSAVRLVRQIPYTLACDLLLTGRHITAAEAKEMGLIGHVVPDGQALTKALELADAISANGPLAVQAILRSIRETECMPENEAFKIDTQIGIKVFLSDDAKEGPRAFAEKRAPNFQNR.

Glutamate 120 is a catalytic residue. Lysine 135 is modified (N6-succinyllysine). The active site involves glutamate 140. An N6-succinyllysine modification is found at lysine 142.

It belongs to the enoyl-CoA hydratase/isomerase family. Homotrimer; substrate probably binds in elongated tunnels between the subunits. In terms of processing, succinylated in vitro at pH 8.1, succinylation reduces specific activity of the enzyme 5.5-fold; succinyl-CoA is a downstream by-product of cholesterol degradation. Can be de-succinylated in vitro by NAD-dependent protein deacylase (AC P9WGG3). Succinylation may be a negative feedback regulator of cholesterol metabolism.

The enzyme catalyses (22E)-3-oxochola-4,22-dien-24-oyl-CoA + H2O = (22R)-hydroxy-3-oxo-chol-4-ene-24-oyl-CoA. The protein operates within steroid metabolism; cholesterol degradation. Degradation of the cholesterol side chain involves 3 multistep beta-oxidation cycles, this may be involved in the second cycle. Hydrates 3-OCDO-CoA ((22E)-3-oxo-chol-4,22-dien-24-oyl-CoA) to make (22R)-HOCO-CoA (3-oxo-chol-4-ene-(22R)-hydroxy-24-oyl-CoA). Also acts on octenoyl-CoA. Not active on (E)-3-OCDS-CoA ((E)-3-oxocholest-4,24-dien-26-oyl-CoA) or 3-OPDC-CoA (3-oxo-4,17-pregnadiene-20-carboxyl-CoA). Hydrates the same substrate as ChsH3, but the 2 enzymes make different stereoisomers of the product. The sequence is that of Enoyl-CoA hydratase EchA19 from Mycobacterium tuberculosis (strain ATCC 25618 / H37Rv).